Here is a 336-residue protein sequence, read N- to C-terminus: Isopentenyl-diphosphate delta-isomerase (336 aa).

5-6 (RK) is a substrate binding site. FMN contacts are provided by residues 60 to 62 (AMT), Ser-90, and Asn-117. Substrate is bound at residue Gln-147. Glu-148 is a binding site for Mg(2+). FMN contacts are provided by residues Lys-179, Ser-204, Thr-209, 253–255 (GVR), and 274–275 (SR).

It belongs to the IPP isomerase type 2 family. Homooctamer. Dimer of tetramers. It depends on FMN as a cofactor. The cofactor is NADPH. Mg(2+) is required as a cofactor.

It localises to the cytoplasm. The enzyme catalyses isopentenyl diphosphate = dimethylallyl diphosphate. Involved in the biosynthesis of isoprenoids. Catalyzes the 1,3-allylic rearrangement of the homoallylic substrate isopentenyl (IPP) to its allylic isomer, dimethylallyl diphosphate (DMAPP). The chain is Isopentenyl-diphosphate delta-isomerase from Streptococcus pneumoniae (strain ATCC BAA-255 / R6).